A 183-amino-acid polypeptide reads, in one-letter code: Adenine phosphoribosyltransferase (183 aa).

It belongs to the purine/pyrimidine phosphoribosyltransferase family. As to quaternary structure, homodimer.

The protein localises to the cytoplasm. It carries out the reaction AMP + diphosphate = 5-phospho-alpha-D-ribose 1-diphosphate + adenine. It participates in purine metabolism; AMP biosynthesis via salvage pathway; AMP from adenine: step 1/1. Catalyzes a salvage reaction resulting in the formation of AMP, that is energically less costly than de novo synthesis. The protein is Adenine phosphoribosyltransferase of Sodalis glossinidius (strain morsitans).